Here is a 136-residue protein sequence, read N- to C-terminus: MSLLNIFNIAGSAMIAQSQKLNVIASNLANMDSTIYKNGKFYPYIAKQVVFSLDTAKNSKIGGVKISAIIDDPSPMKLIYDPNNPMANNKGYILASNVNPITEMVNNIAAARSYQANIEVLKTAKSMIMKTLTISE.

This sequence belongs to the flagella basal body rod proteins family. As to quaternary structure, the basal body constitutes a major portion of the flagellar organelle and consists of four rings (L,P,S, and M) mounted on a central rod. The rod consists of about 26 subunits of FlgG in the distal portion, and FlgB, FlgC and FlgF are thought to build up the proximal portion of the rod with about 6 subunits each.

It is found in the bacterial flagellum basal body. The sequence is that of Flagellar basal-body rod protein FlgC (flgC) from Buchnera aphidicola subsp. Acyrthosiphon pisum (strain APS) (Acyrthosiphon pisum symbiotic bacterium).